The chain runs to 123 residues: rRNA-processing protein cgr-1 (123 aa).

Residues 1–13 show a composition bias toward low complexity; it reads MSSTTTTTQTTSQ. Disordered stretches follow at residues 1–47 and 85–123; these read MSST…GLTS and EKRA…LINS. Residues 49–110 are a coiled coil; sequence EKRAKERQLL…EKMHKKRVER (62 aa). A compositionally biased stretch (basic and acidic residues) spans 85–102; sequence EKRAKKEEKERYEKMAEK. Positions 103–123 are enriched in basic residues; the sequence is MHKKRVERLKRKEKRNKLINS.

Belongs to the CGR1 family.

Its subcellular location is the nucleus. The protein resides in the nucleolus. In terms of biological role, involved in nucleolar integrity and required for processing of the pre-rRNA for the 60S ribosome subunit. This Neurospora crassa (strain ATCC 24698 / 74-OR23-1A / CBS 708.71 / DSM 1257 / FGSC 987) protein is rRNA-processing protein cgr-1 (cgr-1).